The chain runs to 281 residues: MEMO1 family protein APE_1771 (281 aa).

It belongs to the MEMO1 family.

The sequence is that of MEMO1 family protein APE_1771 from Aeropyrum pernix (strain ATCC 700893 / DSM 11879 / JCM 9820 / NBRC 100138 / K1).